Reading from the N-terminus, the 137-residue chain is Transcription antitermination protein NusB (137 aa).

It belongs to the NusB family.

Its function is as follows. Involved in transcription antitermination. Required for transcription of ribosomal RNA (rRNA) genes. Binds specifically to the boxA antiterminator sequence of the ribosomal RNA (rrn) operons. This Actinobacillus pleuropneumoniae serotype 5b (strain L20) protein is Transcription antitermination protein NusB.